We begin with the raw amino-acid sequence, 333 residues long: Ketol-acid reductoisomerase (NADP(+)) (333 aa).

A KARI N-terminal Rossmann domain is found at A2 to T182. NADP(+)-binding positions include Y25 to Q28, R48, S51, and D83 to Q86. H108 is a catalytic residue. G134 provides a ligand contact to NADP(+). The region spanning T183–I328 is the KARI C-terminal knotted domain. Mg(2+)-binding residues include D191, E195, E227, and E231. S252 contacts substrate.

Belongs to the ketol-acid reductoisomerase family. The cofactor is Mg(2+).

The enzyme catalyses (2R)-2,3-dihydroxy-3-methylbutanoate + NADP(+) = (2S)-2-acetolactate + NADPH + H(+). It catalyses the reaction (2R,3R)-2,3-dihydroxy-3-methylpentanoate + NADP(+) = (S)-2-ethyl-2-hydroxy-3-oxobutanoate + NADPH + H(+). The protein operates within amino-acid biosynthesis; L-isoleucine biosynthesis; L-isoleucine from 2-oxobutanoate: step 2/4. It functions in the pathway amino-acid biosynthesis; L-valine biosynthesis; L-valine from pyruvate: step 2/4. In terms of biological role, involved in the biosynthesis of branched-chain amino acids (BCAA). Catalyzes an alkyl-migration followed by a ketol-acid reduction of (S)-2-acetolactate (S2AL) to yield (R)-2,3-dihydroxy-isovalerate. In the isomerase reaction, S2AL is rearranged via a Mg-dependent methyl migration to produce 3-hydroxy-3-methyl-2-ketobutyrate (HMKB). In the reductase reaction, this 2-ketoacid undergoes a metal-dependent reduction by NADPH to yield (R)-2,3-dihydroxy-isovalerate. The polypeptide is Ketol-acid reductoisomerase (NADP(+)) (Desulfitobacterium hafniense (strain DSM 10664 / DCB-2)).